The chain runs to 355 residues: MKKLVLIGGGYGNMRVLHRLLPNQLPDDVSITLIDRNPYHCLKTEYYALAAGTISDHHIRVSFPEHPRLDVQYGDITSIDIVQKQVLFQDREPISYDDAIIGLGCEDKYHNVPGAPEFTYSIQTIDQSRETYQKLNNLSANATVAIVGAGLSGVELASELRESRDDLNIILFDRGNLILSSFPERLSKYVQKWFEEHGVRIINRANITKVEEGVVYNHDDPISADAIVWTAGIQPNKVVRDLDVEKDAQGRIVLTPHHNLPGDEHLYVVGDCASLPHAPSAQLAEAQAEQIVQILQKRWNGEALPESMPQFKLKGVLGSLGKKAGFGLVADRPLIGRVPRMLKSGLLWMYKHHNG.

Belongs to the NADH dehydrogenase family. FAD is required as a cofactor.

The protein is NADH dehydrogenase-like protein YutJ (yutJ) of Bacillus subtilis (strain 168).